Consider the following 213-residue polypeptide: MNATDLKLYLVTHRYDDNEATFLAKIAAACENSVTMVQLREKMLSTRAYFELAQRVKLITDRYQIPLIIDDRVDICLAVDAAGVHIGDDELPVAMTRQLIGPDKVLGVSTKTVETAVAAVAAGADYLGVGAIFPTQTKANAAVTPIATLKAITAQVAVPVVAIGGVKEANLATFKDTGIAGVAIVSEIMQAPDIAHKVQALRTKLKAVLPNDR.

4-amino-2-methyl-5-(diphosphooxymethyl)pyrimidine contacts are provided by residues 38–42 (QLREK) and Asp-70. Mg(2+)-binding residues include Asp-71 and Glu-90. Ser-109 serves as a coordination point for 4-amino-2-methyl-5-(diphosphooxymethyl)pyrimidine. 135 to 137 (TQT) provides a ligand contact to 2-[(2R,5Z)-2-carboxy-4-methylthiazol-5(2H)-ylidene]ethyl phosphate. Lys-138 is a binding site for 4-amino-2-methyl-5-(diphosphooxymethyl)pyrimidine. Residues Gly-165 and 185 to 186 (VS) contribute to the 2-[(2R,5Z)-2-carboxy-4-methylthiazol-5(2H)-ylidene]ethyl phosphate site.

Belongs to the thiamine-phosphate synthase family. The cofactor is Mg(2+).

It carries out the reaction 2-[(2R,5Z)-2-carboxy-4-methylthiazol-5(2H)-ylidene]ethyl phosphate + 4-amino-2-methyl-5-(diphosphooxymethyl)pyrimidine + 2 H(+) = thiamine phosphate + CO2 + diphosphate. The enzyme catalyses 2-(2-carboxy-4-methylthiazol-5-yl)ethyl phosphate + 4-amino-2-methyl-5-(diphosphooxymethyl)pyrimidine + 2 H(+) = thiamine phosphate + CO2 + diphosphate. It catalyses the reaction 4-methyl-5-(2-phosphooxyethyl)-thiazole + 4-amino-2-methyl-5-(diphosphooxymethyl)pyrimidine + H(+) = thiamine phosphate + diphosphate. It functions in the pathway cofactor biosynthesis; thiamine diphosphate biosynthesis; thiamine phosphate from 4-amino-2-methyl-5-diphosphomethylpyrimidine and 4-methyl-5-(2-phosphoethyl)-thiazole: step 1/1. Condenses 4-methyl-5-(beta-hydroxyethyl)thiazole monophosphate (THZ-P) and 2-methyl-4-amino-5-hydroxymethyl pyrimidine pyrophosphate (HMP-PP) to form thiamine monophosphate (TMP). The polypeptide is Thiamine-phosphate synthase (Lacticaseibacillus paracasei (strain ATCC 334 / BCRC 17002 / CCUG 31169 / CIP 107868 / KCTC 3260 / NRRL B-441) (Lactobacillus paracasei)).